Here is a 632-residue protein sequence, read N- to C-terminus: Probable membrane transporter protein MamO (632 aa).

A helical transmembrane segment spans residues 25 to 45 (APVSILAFLILVTFAWGAYLL). The interval 78–268 (LYYTVPPAVV…VIVSHLQDVV (191 aa)) is protease-like. The a divalent metal cation site is built by H148 and H263. The next 7 membrane-spanning stretches (helical) occupy residues 340-360 (IGGY…AAGV), 412-432 (LVQW…VVIG), 434-454 (FIGN…FALI), 513-533 (AVLG…GGVI), 550-570 (IANS…VAFI), 582-602 (APVT…ILGA), and 612-632 (VLKG…LTTV). Positions 365–632 (MTMGGGVLQV…AIAIKMLTTV (268 aa)) are TSUP-like.

The protein in the N-terminal section; belongs to the peptidase S1C family. In the C-terminal section; belongs to the 4-toluene sulfonate uptake permease (TSUP) (TC 2.A.102) family. It depends on a metal cation as a cofactor. Subject to proteolytic cleavage by MamE.

Its subcellular location is the magnetosome membrane. In terms of biological role, plays 2 roles; promotes magnetite nucleation/formation and activates the MamE protease. Despite its near conservation of a protease-like sequence, this is probably not a protease. Required in conjunction with MamP for proteolysis of at least MamE, itself and MamP. May transport a solute that controls MamE's protease activity. May place individual iron atoms into the magnetite lattice. One of 7 genes (mamLQBIEMO) able to induce magnetosome membrane biogenesis; coexpression of mamLQRBIEMO in a deletion of the 17 gene mamAB operon restores magnetosome vesicle formation but not magnetite biosynthesis. In Magnetospirillum gryphiswaldense (strain DSM 6361 / JCM 21280 / NBRC 15271 / MSR-1), this protein is Probable membrane transporter protein MamO.